A 185-amino-acid chain; its full sequence is Ribosome maturation factor RimM (185 aa).

The PRC barrel domain occupies 103–177 (SEEYYWYEIL…SIIVKKIEWY (75 aa)).

Belongs to the RimM family. As to quaternary structure, binds ribosomal protein uS19.

Its subcellular location is the cytoplasm. Functionally, an accessory protein needed during the final step in the assembly of 30S ribosomal subunit, possibly for assembly of the head region. Essential for efficient processing of 16S rRNA. May be needed both before and after RbfA during the maturation of 16S rRNA. It has affinity for free ribosomal 30S subunits but not for 70S ribosomes. In Petrotoga mobilis (strain DSM 10674 / SJ95), this protein is Ribosome maturation factor RimM.